The sequence spans 186 residues: Ribosome-recycling factor (186 aa).

Residues 144-163 form a disordered region; it reads EKDGVIGQDESRAQSERVQK.

This sequence belongs to the RRF family.

The protein resides in the cytoplasm. Responsible for the release of ribosomes from messenger RNA at the termination of protein biosynthesis. May increase the efficiency of translation by recycling ribosomes from one round of translation to another. This Rhizobium johnstonii (strain DSM 114642 / LMG 32736 / 3841) (Rhizobium leguminosarum bv. viciae) protein is Ribosome-recycling factor.